A 313-amino-acid chain; its full sequence is Solute carrier family 35 member E3 (313 aa).

Transmembrane regions (helical) follow at residues 14–34 (IIAG…INKW), 40–60 (GFPN…GLFI), 77–97 (ILLL…SLQS), 100–122 (IGTY…TMYY), 130–146 (IKLT…LNSY), 153–173 (LMGM…QVWV), 187–207 (LLYY…PFFE), 215–235 (IFGP…VIAF), 252–272 (TYNM…YVLF), and 275–295 (PLSL…LAYT).

The protein belongs to the TPT transporter family. SLC35E subfamily.

The protein localises to the membrane. In terms of biological role, putative transporter. The sequence is that of Solute carrier family 35 member E3 (slc35e3) from Danio rerio (Zebrafish).